Here is a 408-residue protein sequence, read N- to C-terminus: Cytotoxic granule-associated RNA binding protein tiar-1 (408 aa).

3 consecutive RRM domains span residues 46-121, 135-213, and 241-312; these read RTLY…WAVE, FHVF…WATR, and TSVY…WGKT.

Expressed in the germline and also in somatic tissues. Expressed in Ggonads and oocytes. Expression is slightly reduced in the most proximal oocytes, especially the -1 oocyte. Aggregates mostly in the head neurons, muscles, intestine, vulval and hypodermal cells during heat shock. Expressed only in the intestine as a response to heat shock, starvation and dietary restriction.

The protein resides in the cytoplasm. It is found in the nucleus. It localises to the stress granule. In terms of biological role, acts downstream of ced-9 in the induction of germline apoptosis under different stress conditions including starvation, osmotic, oxidative, heat shock and UV stress. Plays a role in the formation of stress granules in response to heat shock and oxidative stress but not in response to osmotic stress. Required for the formation of stress granules in the core gonad but may not play a critical role in this process in the oocytes. Plays an important role in the formation of stress granules in the embryo. Protects female germ cells and embryos from heat shock. The protein is Cytotoxic granule-associated RNA binding protein tiar-1 of Caenorhabditis elegans.